We begin with the raw amino-acid sequence, 245 residues long: MIKLVLIRHGQSLWNLENRFTGWTDVDLSENGLSEAREAGAILKKNGYTFDVAYTSVLKRAIRTLWIVLHEMNLSWVPVHKSWKLNERHYGALQGLNKDETAKKYGEEQVHIWRRSIDVRPPALTEDDPRYEMNDPRYKELKKGEFPLTECLVDTEKRVLNYWHSEIAPSLKSGEKVIISSHGNTIRSLVKYLDNLSSDGVVSLNIPTSIPLVYELDDDLRPIRHYYLSMDGEVPEGEFPKHIVF.

Residues 8–15, 21–22, R60, 87–90, K98, 114–115, and 183–184 contribute to the substrate site; these read RHGQSLWN, TG, ERHY, RR, and GN. Catalysis depends on H9, which acts as the Tele-phosphohistidine intermediate. E87 (proton donor/acceptor) is an active-site residue.

It belongs to the phosphoglycerate mutase family. BPG-dependent PGAM subfamily.

It carries out the reaction (2R)-2-phosphoglycerate = (2R)-3-phosphoglycerate. Its pathway is carbohydrate degradation; glycolysis; pyruvate from D-glyceraldehyde 3-phosphate: step 3/5. Its function is as follows. Catalyzes the interconversion of 2-phosphoglycerate and 3-phosphoglycerate. In Bacillus thuringiensis (strain Al Hakam), this protein is 2,3-bisphosphoglycerate-dependent phosphoglycerate mutase.